The primary structure comprises 446 residues: MSIDTIVAIATPPGRGGVGIVRISGPNAYAIALCLNGNKALQPRLATFCSLYKGNNEVLDQGLVLYFKGPHSFTGEDVIEIQAHGSPVVLDLLIKESIAAGARLARPGEFSERAFLNDKIDLIQAEAIADLIQASSDTAARMALKSLQGDFSKKINQLNEELIYLRMYVEAAIDFPEEEIDFLNDGNVSQLLQKIIGRLEDIRSQANQGVLLREGLSLVIAGRPNAGKSTLINNLAGRDVAIVTEIAGTTRDIMREHILLDDIPLHIIDTAGLRDSDDLVEKEGIKRAWQELKRADCVLLVVDINNPDQQNSLLNELRLTLPNKIPIITVYNKIDTTKLTAKCDEHTVYLSAKTGEGLDELKKVIKQVVGYQPTEGQFLARRRHLQALDEAKALLLTGQSQLTNHKAGELLAEDLRLAHQTLCEITGEFTSDDLLGKIFSSFCIGK.

(6S)-5-formyl-5,6,7,8-tetrahydrofolate contacts are provided by Arg-22, Glu-80, and Lys-119. Residues 215 to 370 enclose the TrmE-type G domain; sequence GLSLVIAGRP…LKKVIKQVVG (156 aa). Position 225 (Asn-225) interacts with K(+). GTP-binding positions include 225–230, 244–250, and 269–272; these read NAGKST, TEIAGTT, and DTAG. Mg(2+) is bound at residue Ser-229. Residues Thr-244, Ile-246, and Thr-249 each contribute to the K(+) site. Thr-250 contributes to the Mg(2+) binding site. Lys-446 contacts (6S)-5-formyl-5,6,7,8-tetrahydrofolate.

The protein belongs to the TRAFAC class TrmE-Era-EngA-EngB-Septin-like GTPase superfamily. TrmE GTPase family. As to quaternary structure, homodimer. Heterotetramer of two MnmE and two MnmG subunits. It depends on K(+) as a cofactor.

The protein localises to the cytoplasm. Exhibits a very high intrinsic GTPase hydrolysis rate. Involved in the addition of a carboxymethylaminomethyl (cmnm) group at the wobble position (U34) of certain tRNAs, forming tRNA-cmnm(5)s(2)U34. The chain is tRNA modification GTPase MnmE from Legionella pneumophila subsp. pneumophila (strain Philadelphia 1 / ATCC 33152 / DSM 7513).